Here is a 182-residue protein sequence, read N- to C-terminus: Coiled-coil domain-containing protein 32 (182 aa).

Basic and acidic residues predominate over residues 1–10 (MMIDDFETHA). Disordered regions lie at residues 1–61 (MMID…FSPW) and 153–182 (PTQN…SPEK). Residues 153–167 (PTQNSETPASSSQTD) are compositionally biased toward polar residues. Residues 172-182 (EEEEECPSPEK) show a composition bias toward acidic residues.

In terms of assembly, associates with adaptor protein complex 2 (AP-2).

The protein localises to the membrane. It localises to the coated pit. Regulates clathrin-mediated endocytsois of cargos such as transferrin probably through the association and modulation of adaptor protein complex 2 (AP-2). Has a role in ciliogenesis and is required for proper cephalic and left/right axis development. The protein is Coiled-coil domain-containing protein 32 of Danio rerio (Zebrafish).